We begin with the raw amino-acid sequence, 328 residues long: L-lactate dehydrogenase (328 aa).

NAD(+) is bound by residues V18, E39, K46, Y71, and 85 to 86 (GA). The substrate site is built by Q88 and R94. NAD(+)-binding positions include S107, 124–126 (AAN), and S149. 126-129 (NPVD) is a binding site for substrate. Residue 154–157 (DSAR) participates in substrate binding. 2 residues coordinate beta-D-fructose 1,6-bisphosphate: R159 and H174. Catalysis depends on H181, which acts as the Proton acceptor. Y226 is modified (phosphotyrosine). T235 is a binding site for substrate.

The protein belongs to the LDH/MDH superfamily. LDH family. Homotetramer.

It localises to the cytoplasm. It catalyses the reaction (S)-lactate + NAD(+) = pyruvate + NADH + H(+). It participates in fermentation; pyruvate fermentation to lactate; (S)-lactate from pyruvate: step 1/1. Allosterically activated by fructose 1,6-bisphosphate (FBP). Its function is as follows. Catalyzes the conversion of lactate to pyruvate. The polypeptide is L-lactate dehydrogenase (Streptococcus thermophilus (strain CNRZ 1066)).